The following is a 232-amino-acid chain: Flagellar L-ring protein (232 aa).

The first 21 residues, M1 to G21, serve as a signal peptide directing secretion. C22 carries N-palmitoyl cysteine lipidation. The S-diacylglycerol cysteine moiety is linked to residue C22.

The protein belongs to the FlgH family. As to quaternary structure, the basal body constitutes a major portion of the flagellar organelle and consists of four rings (L,P,S, and M) mounted on a central rod.

It localises to the cell outer membrane. The protein localises to the bacterial flagellum basal body. Assembles around the rod to form the L-ring and probably protects the motor/basal body from shearing forces during rotation. The polypeptide is Flagellar L-ring protein (Escherichia coli O7:K1 (strain IAI39 / ExPEC)).